A 115-amino-acid chain; its full sequence is Glutaredoxin 4 (115 aa).

The 103-residue stretch at 5–107 (IEKIQRQIAE…QLIKETAAKY (103 aa)) folds into the Glutaredoxin domain. K22 is a glutathione binding site. Residue C30 participates in [2Fe-2S] cluster binding. Residues R59, F71, and 84-85 (CD) each bind glutathione.

It belongs to the glutaredoxin family. Monothiol subfamily. In terms of assembly, homodimer.

The protein localises to the cytoplasm. Monothiol glutaredoxin involved in the biogenesis of iron-sulfur clusters. This chain is Glutaredoxin 4 (grxD), found in Shigella flexneri.